Reading from the N-terminus, the 123-residue chain is Large ribosomal subunit protein bL12 (123 aa).

It belongs to the bacterial ribosomal protein bL12 family. As to quaternary structure, homodimer. Part of the ribosomal stalk of the 50S ribosomal subunit. Forms a multimeric L10(L12)X complex, where L10 forms an elongated spine to which 2 to 4 L12 dimers bind in a sequential fashion. Binds GTP-bound translation factors.

In terms of biological role, forms part of the ribosomal stalk which helps the ribosome interact with GTP-bound translation factors. Is thus essential for accurate translation. In Mycoplasmopsis agalactiae (strain NCTC 10123 / CIP 59.7 / PG2) (Mycoplasma agalactiae), this protein is Large ribosomal subunit protein bL12.